A 174-amino-acid chain; its full sequence is Period clock protein (174 aa).

Residues 46-134 are disordered; sequence SSEGTGAGTG…GTGTGTGTGT (89 aa). Tandem repeats lie at residues 49–50, 51–52, 53–54, 55–56, 57–58, 59–60, 61–62, 63–64, 65–66, 67–68, 69–70, 71–72, 73–74, 75–76, 77–78, 79–80, 81–82, 83–84, 85–86, 87–88, 89–90, 91–92, 93–94, 95–96, 97–98, 99–100, 101–102, 103–104, 105–106, 107–108, 109–110, 111–112, 113–114, 115–116, 117–118, 119–120, 121–122, 123–124, 125–126, 127–128, 129–130, 131–132, 133–134, 135–136, and 137–138. The 45 X 2 AA tandem repeats of G-[TA] stretch occupies residues 49–138; the sequence is GTGAGTGTGT…GTGTGTGTGT (90 aa). Residues 50–134 are compositionally biased toward gly residues; the sequence is TGAGTGTGTG…GTGTGTGTGT (85 aa).

The protein localises to the plastid. It is found in the chloroplast. This is Period clock protein from Acetabularia acetabulum (Mermaid's wine glass).